The primary structure comprises 119 residues: uncharacterized protein (119 aa).

An N-terminal signal peptide occupies residues M1–G30.

This is an uncharacterized protein from Escherichia coli (strain UTI89 / UPEC).